We begin with the raw amino-acid sequence, 539 residues long: MEKEVATDPLPQEIPSDAPDEGGSLSRPAANTWTVVSLTIALCLGVFCMSLDVTIITTAIPRITDQFDSLDDIGWYGSSYLLTNCATTLAFGKFYTFYSTKWVYLSALFLFEVGSLVCGVTPTSVGLILGRCIAGLGAGGLFSGSLLIIAQTVPLHRRPVFTALLGSMYGIASVAGPPLGGALTDRVSWRWCFYINLPIGAVTAAFVLFFFHAPNSVKRRPELRKLLSELDPIGSFFFLPAIVCLLLALQWGGTQYSWKSPRIIVLFVLTGVLLLAFVAVQIRQNEKATLPPRIVQNRNIWSSAWFAITLNGAYFVFIYYLPIWFQAIKAASATKSGVMNLPSIIAVVVVSIISGMLVTIFGYYNPVMIMSSVTLSIGAGLLSTLKTDSGSGEWIGYQILMGLGVGLGMQQPFMVVQNVLPDGDVPTGTAVITFAQTLGGAIFISVGQNIFQNQFAHTMHLEDPSVNVATVLSAGTTTLRKYLPAEQLPAVLRSYNTAITQAFYVGVALASLSCIGTIALEWKSVKKPRNTTPNDHSGS.

The segment at 1 to 25 (MEKEVATDPLPQEIPSDAPDEGGSL) is disordered. The next 12 helical transmembrane spans lie at 36 to 56 (VSLT…VTII), 108 to 128 (LFLF…VGLI), 133 to 153 (IAGL…AQTV), 160 to 180 (VFTA…PPLG), 191 to 211 (WCFY…LFFF), 233 to 253 (IGSF…QWGG), 262 to 282 (RIIV…AVQI), 305 to 325 (WFAI…PIWF), 338 to 360 (VMNL…LVTI), 362 to 384 (GYYN…LLST), 395 to 415 (IGYQ…PFMV), and 502 to 522 (AFYV…ALEW).

It belongs to the major facilitator superfamily. TCR/Tet family.

It localises to the membrane. Efflux pump; part of the gene cluster that mediates the biosynthesis of the mycotoxins roquefortine C and meleagrin. This is Efflux pump roqT from Penicillium rubens (strain ATCC 28089 / DSM 1075 / NRRL 1951 / Wisconsin 54-1255) (Penicillium chrysogenum).